The chain runs to 217 residues: MDLAQPSQPVDELELSVLERQPEENTPLNGADKVFPSLDEEVPPAEANKESPWSSCNKNVVGRCKLWMIITSIFLGVITVIIIGLCLAAVTYVDEDENEILELSSNKTFFIMLKIPEECVAEEELPHLLTERLTDVYSTSPSLGRYFTSVEIVDFSGENATVTYDLQFGVPSDDENFMKYMMSEELVLGILLQDFRDQNIPGCESLGLDPTSLLLYE.

Residues 1–37 (MDLAQPSQPVDELELSVLERQPEENTPLNGADKVFPS) are disordered. A helical membrane pass occupies residues 66–86 (LWMIITSIFLGVITVIIIGLC).

As to quaternary structure, interacts with LIPH. In terms of tissue distribution, detected predominantly in the skin, with strongest expression in the inner root sheath of the hair follicle.

Its subcellular location is the endoplasmic reticulum. The protein localises to the cell membrane. In terms of biological role, has a role in LIPH-mediated synthesis of 2-acyl lysophosphatidic acid (LPA). LPA is a bioactive lipid mediator involved in different biological processes, and necessary to promote hair formation and growth. This chain is TPA-induced transmembrane protein (TTMP), found in Homo sapiens (Human).